A 759-amino-acid polypeptide reads, in one-letter code: Protein AKNAD1 (759 aa).

The interval 169–246 (TDQLNPKKDG…HTEKASSGNR (78 aa)) is disordered. The span at 181 to 192 (SNKPGSPTMTEE) shows a compositional bias: polar residues. Residues 371–482 (QKISQGKQMC…EDVKDKVDES (112 aa)) are a coiled coil. A compositionally biased stretch (polar residues) spans 484-496 (YTSAPSLPVSSPV). Disordered stretches follow at residues 484-543 (YTSA…QEAP), 634-654 (EKAPHSDSTPNSDTGHSFCSD), 678-723 (CRKE…PSLA), and 735-759 (PDTSKSSPTPGWQEAELGLENMKSQ). The span at 497-509 (TLDDLASTSSSLS) shows a compositional bias: low complexity. Polar residues predominate over residues 639 to 654 (SDSTPNSDTGHSFCSD). The segment covering 679-688 (RKEPPKEFHY) has biased composition (basic and acidic residues). The span at 735–744 (PDTSKSSPTP) shows a compositional bias: polar residues.

It belongs to the AKNA family.

The chain is Protein AKNAD1 (AKNAD1) from Macaca fascicularis (Crab-eating macaque).